A 206-amino-acid chain; its full sequence is Ribosomal RNA small subunit methyltransferase G (206 aa).

S-adenosyl-L-methionine-binding positions include Gly-73, Leu-78, 124–125 (VE), and Arg-139.

It belongs to the methyltransferase superfamily. RNA methyltransferase RsmG family.

Its subcellular location is the cytoplasm. The catalysed reaction is guanosine(527) in 16S rRNA + S-adenosyl-L-methionine = N(7)-methylguanosine(527) in 16S rRNA + S-adenosyl-L-homocysteine. Its function is as follows. Specifically methylates the N7 position of guanine in position 527 of 16S rRNA. The protein is Ribosomal RNA small subunit methyltransferase G of Idiomarina loihiensis (strain ATCC BAA-735 / DSM 15497 / L2-TR).